We begin with the raw amino-acid sequence, 88 residues long: Small ribosomal subunit protein uS15 (88 aa).

It belongs to the universal ribosomal protein uS15 family. Part of the 30S ribosomal subunit. Forms a bridge to the 50S subunit in the 70S ribosome, contacting the 23S rRNA.

Functionally, one of the primary rRNA binding proteins, it binds directly to 16S rRNA where it helps nucleate assembly of the platform of the 30S subunit by binding and bridging several RNA helices of the 16S rRNA. Forms an intersubunit bridge (bridge B4) with the 23S rRNA of the 50S subunit in the ribosome. The sequence is that of Small ribosomal subunit protein uS15 from Leptospira biflexa serovar Patoc (strain Patoc 1 / Ames).